Consider the following 297-residue polypeptide: Calponin-1 (297 aa).

The 104-residue stretch at 28–131 (HQREQELREW…STLLALASMA (104 aa)) folds into the Calponin-homology (CH) domain. Calponin-like repeat units follow at residues 164-189 (IGLQMGTNKFASQQGMTAYGTRRHLY), 204-229 (ISLQMGTNKGASQAGMTAPGTKRQIF), and 243-268 (VSLQMGSNKGASQRGMTVYGLPRQVY). T170 is modified (phosphothreonine; by ROCK2). The residue at position 175 (S175) is a Phosphoserine; by ROCK2. Phosphothreonine; by ROCK2 occurs at positions 180 and 184. Phosphothreonine; by ROCK2 is present on T259.

It belongs to the calponin family. As to quaternary structure, part of cGMP kinase signaling complex at least composed of ACTA2/alpha-actin, CNN1/calponin H1, PLN/phospholamban, PRKG1 and ITPR1. Smooth muscle, and tissues containing significant amounts of smooth muscle.

Functionally, thin filament-associated protein that is implicated in the regulation and modulation of smooth muscle contraction. It is capable of binding to actin, calmodulin and tropomyosin. The interaction of calponin with actin inhibits the actomyosin Mg-ATPase activity. This Mus musculus (Mouse) protein is Calponin-1 (Cnn1).